Reading from the N-terminus, the 156-residue chain is 2-C-methyl-D-erythritol 2,4-cyclodiphosphate synthase (156 aa).

A divalent metal cation-binding residues include D8 and H10. Residues 8-10 and 34-35 contribute to the 4-CDP-2-C-methyl-D-erythritol 2-phosphate site; these read DVH and HS. H42 lines the a divalent metal cation pocket. 4-CDP-2-C-methyl-D-erythritol 2-phosphate-binding positions include 56-58, 61-65, 100-106, 132-135, and F139; these read DIG, FPDTD, AQRPKMA, and TTEE.

This sequence belongs to the IspF family. As to quaternary structure, homotrimer. Requires a divalent metal cation as cofactor.

The enzyme catalyses 4-CDP-2-C-methyl-D-erythritol 2-phosphate = 2-C-methyl-D-erythritol 2,4-cyclic diphosphate + CMP. Its pathway is isoprenoid biosynthesis; isopentenyl diphosphate biosynthesis via DXP pathway; isopentenyl diphosphate from 1-deoxy-D-xylulose 5-phosphate: step 4/6. In terms of biological role, involved in the biosynthesis of isopentenyl diphosphate (IPP) and dimethylallyl diphosphate (DMAPP), two major building blocks of isoprenoid compounds. Catalyzes the conversion of 4-diphosphocytidyl-2-C-methyl-D-erythritol 2-phosphate (CDP-ME2P) to 2-C-methyl-D-erythritol 2,4-cyclodiphosphate (ME-CPP) with a corresponding release of cytidine 5-monophosphate (CMP). This is 2-C-methyl-D-erythritol 2,4-cyclodiphosphate synthase from Clostridium perfringens (strain ATCC 13124 / DSM 756 / JCM 1290 / NCIMB 6125 / NCTC 8237 / Type A).